Reading from the N-terminus, the 316-residue chain is Beta-lactamase 3 (316 aa).

The signal sequence occupies residues 1–29 (MFVLNKFFTNSHYKKIVPVVLLSCATLIG). The N-palmitoyl cysteine moiety is linked to residue C30. Residue C30 is the site of S-diacylglycerol cysteine attachment. The tract at residues 34 to 53 (NTQSESNKQTNQTNQVKQEN) is disordered. Residues 40–50 (NKQTNQTNQVK) are compositionally biased toward low complexity. S95 (acyl-ester intermediate) is an active-site residue. The active-site Proton acceptor is E191. 257-259 (KTG) is a substrate binding site.

It belongs to the class-A beta-lactamase family.

The protein localises to the cell membrane. The catalysed reaction is a beta-lactam + H2O = a substituted beta-amino acid. The protein is Beta-lactamase 3 (blaZ) of Bacillus cereus.